A 249-amino-acid polypeptide reads, in one-letter code: Secreted flagellin C (249 aa).

In terms of assembly, interacts with FliS.

It is found in the secreted. In terms of biological role, might play a role in virulence. This chain is Secreted flagellin C (flaC), found in Campylobacter jejuni subsp. jejuni serotype O:6 (strain 81116 / NCTC 11828).